The chain runs to 139 residues: Holo-[acyl-carrier-protein] synthase (139 aa).

2 residues coordinate Mg(2+): D8 and E57.

It belongs to the P-Pant transferase superfamily. AcpS family. It depends on Mg(2+) as a cofactor.

The protein resides in the cytoplasm. It catalyses the reaction apo-[ACP] + CoA = holo-[ACP] + adenosine 3',5'-bisphosphate + H(+). In terms of biological role, transfers the 4'-phosphopantetheine moiety from coenzyme A to a Ser of acyl-carrier-protein. The chain is Holo-[acyl-carrier-protein] synthase from Dinoroseobacter shibae (strain DSM 16493 / NCIMB 14021 / DFL 12).